The following is a 158-amino-acid chain: uncharacterized protein (158 aa).

The N-terminal stretch at 1–22 (MKKIPNKLLAVSAFLTITTTYA) is a signal peptide. Residues 120–140 (LTGIIEYDTKFENHYETLVEA) traverse the membrane as a helical segment.

It is found in the cell membrane. This is an uncharacterized protein from Bacillus cereus.